The chain runs to 190 residues: Guanylate kinase (190 aa).

The Guanylate kinase-like domain maps to 8 to 186; it reads ARPTVLTGPS…ALAELEKQMN (179 aa). Residue 15–22 participates in ATP binding; sequence GPSGVGKG.

This sequence belongs to the guanylate kinase family.

It localises to the cytoplasm. The enzyme catalyses GMP + ATP = GDP + ADP. It carries out the reaction dZMP + ATP = dZDP + ADP. The protein operates within purine metabolism. Functionally, essential for recycling GMP and indirectly, cGMP. Its function is as follows. (Microbial infection) Catalyzes the phosphorylation of dZMP to dZDP, when the bacterium is infected by a phage that produces the substrate for the synthesis of dZTP (2- amino-2'-deoxyadenosine 5'-triphosphate), which is then used by the phage as a DNA polymerase substrate. This is Guanylate kinase from Synechococcus sp. (strain CC9311).